The following is a 376-amino-acid chain: Succinyl-diaminopimelate desuccinylase (376 aa).

His66 serves as a coordination point for Zn(2+). Asp68 is an active-site residue. A Zn(2+)-binding site is contributed by Asp99. Catalysis depends on Glu133, which acts as the Proton acceptor. Residues Glu134, Glu162, and His348 each coordinate Zn(2+).

It belongs to the peptidase M20A family. DapE subfamily. As to quaternary structure, homodimer. Requires Zn(2+) as cofactor. Co(2+) is required as a cofactor.

It carries out the reaction N-succinyl-(2S,6S)-2,6-diaminopimelate + H2O = (2S,6S)-2,6-diaminopimelate + succinate. Its pathway is amino-acid biosynthesis; L-lysine biosynthesis via DAP pathway; LL-2,6-diaminopimelate from (S)-tetrahydrodipicolinate (succinylase route): step 3/3. Its function is as follows. Catalyzes the hydrolysis of N-succinyl-L,L-diaminopimelic acid (SDAP), forming succinate and LL-2,6-diaminopimelate (DAP), an intermediate involved in the bacterial biosynthesis of lysine and meso-diaminopimelic acid, an essential component of bacterial cell walls. The protein is Succinyl-diaminopimelate desuccinylase of Xanthomonas euvesicatoria pv. vesicatoria (strain 85-10) (Xanthomonas campestris pv. vesicatoria).